A 125-amino-acid chain; its full sequence is MSYTALAVTFFGWLALSSACYIQNCPIGGKRSVIDFMDVRKCIPCGPRNKGHCFGPNICCGEELGCYFGTTETLRCQEENFLPSPCESGRKPCGNNGGNCARSGICCNHESCTMDPACEQDSVFS.

An N-terminal signal peptide occupies residues 1–19 (MSYTALAVTFFGWLALSSA). A disulfide bridge links Cys20 with Cys25. Gly28 carries the post-translational modification Glycine amide. 7 disulfides stabilise this stretch: Cys42-Cys86, Cys45-Cys59, Cys53-Cys76, Cys60-Cys66, Cys93-Cys106, Cys100-Cys118, and Cys107-Cys112.

Belongs to the vasopressin/oxytocin family. Mesotocin is produced by magnocellular preoptic neurons in the hypothalamus in amphibians, reptiles and birds.

It is found in the secreted. Functionally, mesotocin is a diuretic hormone. The polypeptide is Mesotocin-neurophysin MT (Bufo japonicus (Japanese common toad)).